Here is a 761-residue protein sequence, read N- to C-terminus: Xaa-Pro dipeptidyl-peptidase (761 aa).

Active-site charge relay system residues include Ser349, Asp469, and His499.

Belongs to the peptidase S15 family. Homodimer.

The protein resides in the cytoplasm. The enzyme catalyses Hydrolyzes Xaa-Pro-|- bonds to release unblocked, N-terminal dipeptides from substrates including Ala-Pro-|-p-nitroanilide and (sequentially) Tyr-Pro-|-Phe-Pro-|-Gly-Pro-|-Ile.. Functionally, removes N-terminal dipeptides sequentially from polypeptides having unsubstituted N-termini provided that the penultimate residue is proline. The chain is Xaa-Pro dipeptidyl-peptidase from Streptococcus equi subsp. equi (strain 4047).